The chain runs to 375 residues: Probable disease resistance protein At1g52660 (375 aa).

Residues 158 to 372 (ENTGIIGLYG…LSNSPPNFSG (215 aa)) enclose the NB-ARC domain. 167 to 174 (GVEGVGKT) is an ATP binding site.

Its function is as follows. Possible disease resistance protein. The protein is Probable disease resistance protein At1g52660 of Arabidopsis thaliana (Mouse-ear cress).